Reading from the N-terminus, the 516-residue chain is MLTWLEQFLIRYPELALFLVIAAGYWIGSFKIGAFSLGPVTGALFAGLVVGDFAHVPVSSMTKSFLFLLFLFGVGYSVGPQFVQAMKRDGLKPVLLAVVVCLTGLAAAIAVGRILGLDPGFAAGLMSGSLSQSAAMGTATDAVNGLAVPEAQRALYISHIAVADAVCYIFGYAGVIMWCTVVAPALLKIDLRDEALKLERSLGMSRAKPGLASAWRKFELRAYRLDEHSPLIGSTVAAAEARPEHRLFIHRIRRGERVLQAEPGTILAPGDVITISAPRQIIVELIGSRAEEVEDRELLDIPLISADVFLINAKLAGMNLQEASQQDWTHGLYLRSLSRGGQELPIAPGVVLQRGDLLRIVGPEPVVENAAKNIGVIVAPSNSIDFVVLGLAIFFGGVVGVLVSFPVGSIKIALSTSVGTLLAGLLVGHLRTLDPRFGRIPDGAISLMTSLGLAAFVGLTGIHAGPIFLSALRDSGISLLLGGMVVTLLPQIVGFCFGHFVLRMNPILLLGGLTGA.

The next 5 helical transmembrane spans lie at 10 to 27, 32 to 54, 64 to 83, 95 to 117, and 165 to 187; these read IRYP…GYWI, IGAF…GDFA, SFLF…PQFV, LLAV…ILGL, and AVCY…PALL. RCK C-terminal domains follow at residues 208-291 and 296-376; these read KPGL…SRAE and RELL…NIGV. The next 4 helical transmembrane spans lie at 386–408, 412–430, 443–465, and 480–502; these read FVVL…FPVG, IALS…VGHL, GAIS…IHAG, and LLGG…HFVL.

This sequence belongs to the AAE transporter (TC 2.A.81) family.

Its subcellular location is the cell membrane. This is an uncharacterized protein from Bradyrhizobium diazoefficiens (strain JCM 10833 / BCRC 13528 / IAM 13628 / NBRC 14792 / USDA 110).